The sequence spans 437 residues: Putative permease IIC component (437 aa).

The PTS EIIC type-2 domain maps to 2-437 (FDYILSLGGT…LFLRKRELSE (436 aa)). The next 12 membrane-spanning stretches (helical) occupy residues 5 to 25 (ILSLGGTVFVPIIMIVIGLIF), 35 to 55 (AGVTVGIGFVGMGLVIVMAID), 88 to 108 (ATAIGAMIIPVIFLLNVAMLV), 134 to 154 (LMTGSLIYGVLGAICHAALSL), 173 to 193 (ISIPQGYGSSSVPLFVLLDAI), 215 to 235 (GMVGDPVIIGVVLGLIFGLAA), 236 to 256 (GEGFKGCASLMITVAAIMVLF), 302 to 322 (TIAVGLLLIPIMLILASILPG), 325 to 345 (VLPLADLPVAPFFICMATVIH), 354 to 374 (ISGVIVMITVLLIATQFAPYF), 385 to 405 (FAGESAQISALSVGNMFGWSI), and 410 to 430 (SLGIIGVVVAVGIVASVVLFL).

Its subcellular location is the cell inner membrane. The phosphoenolpyruvate-dependent sugar phosphotransferase system (PTS), a major carbohydrate active -transport system, catalyzes the phosphorylation of incoming sugar substrates concomitant with their translocation across the cell membrane. This is Putative permease IIC component (sgcC) from Escherichia coli (strain K12).